Here is a 313-residue protein sequence, read N- to C-terminus: Ribosomal RNA small subunit methyltransferase H (313 aa).

Residues 31–33 (GGH), Asp-51, Phe-77, Asp-95, and Gln-102 each bind S-adenosyl-L-methionine.

The protein belongs to the methyltransferase superfamily. RsmH family.

It localises to the cytoplasm. It carries out the reaction cytidine(1402) in 16S rRNA + S-adenosyl-L-methionine = N(4)-methylcytidine(1402) in 16S rRNA + S-adenosyl-L-homocysteine + H(+). In terms of biological role, specifically methylates the N4 position of cytidine in position 1402 (C1402) of 16S rRNA. This is Ribosomal RNA small subunit methyltransferase H from Xylella fastidiosa (strain 9a5c).